The sequence spans 1382 residues: Hepatocyte growth factor receptor (1382 aa).

The first 24 residues, 1–24, serve as a signal peptide directing secretion; sequence MKAPTALAPGILLLLLTLAQRSHG. Topologically, residues 25 to 935 are extracellular; the sequence is ECKEALVKSE…IVQPDQNFAG (911 aa). Residues 27 to 516 enclose the Sema domain; the sequence is KEALVKSEMN…TGKKITKIPL (490 aa). Residue asparagine 45 is glycosylated (N-linked (GlcNAc...) asparagine). Disulfide bonds link cysteine 95–cysteine 101, cysteine 98–cysteine 160, cysteine 133–cysteine 141, and cysteine 173–cysteine 176. N-linked (GlcNAc...) asparagine glycosylation occurs at asparagine 106. Residues asparagine 203 and asparagine 359 are each glycosylated (N-linked (GlcNAc...) asparagine). 2 cysteine pairs are disulfide-bonded: cysteine 299/cysteine 364 and cysteine 386/cysteine 398. N-linked (GlcNAc...) asparagine glycosylation is found at asparagine 400 and asparagine 406. Cystine bridges form between cysteine 521/cysteine 539, cysteine 527/cysteine 562, cysteine 530/cysteine 546, and cysteine 542/cysteine 552. 3 consecutive IPT/TIG domains span residues 564–656, 658–740, and 743–837; these read PAVY…FSYV, PVIT…FSYR, and PVVS…LTYV. O-linked (Man) threonine glycosylation occurs at threonine 583. N-linked (GlcNAc...) asparagine glycans are attached at residues asparagine 608 and asparagine 636. Threonine 677 and threonine 762 each carry an O-linked (Man) threonine glycan. Residues asparagine 786 and asparagine 880 are each glycosylated (N-linked (GlcNAc...) asparagine). Residues 936 to 956 form a helical membrane-spanning segment; it reads LIIGAVSISVVVLLVSGLFLW. At 957–1379 the chain is on the cytoplasmic side; the sequence is LRKRKHKDLG…LPSQDNIDGE (423 aa). Serine 967 carries the post-translational modification Phosphoserine. Position 978 is a phosphothreonine (threonine 978). A phosphoserine mark is found at serine 991, serine 998, and serine 1001. Tyrosine 1004 is subject to Phosphotyrosine. A Protein kinase domain is found at 1079–1346; it reads VHFNEVIGRG…RISSIFSTFI (268 aa). ATP-binding positions include 1085–1093 and lysine 1111; that span reads IGRGHFGCV. Residue aspartate 1205 is the Proton acceptor of the active site. The segment at 1213–1382 is interaction with RANBP9; sequence LDEKFTVKVA…QDNIDGEANT (170 aa). Phosphotyrosine is present on tyrosine 1231. Tyrosine 1235 and tyrosine 1236 each carry phosphotyrosine; by autocatalysis. Threonine 1290 bears the Phosphothreonine mark. Positions 1321 to 1360 are interaction with MUC20; that stretch reads WHPKAEMRPSVSELVSRISSIFSTFIGEHYVHVNATYVNV. Phosphotyrosine; by autocatalysis occurs at positions 1350 and 1357. Tyrosine 1366 bears the Phosphotyrosine mark.

It belongs to the protein kinase superfamily. Tyr protein kinase family. Heterodimer made of an alpha chain (50 kDa) and a beta chain (145 kDa) which are disulfide linked. Binds PLXNB1. Interacts when phosphorylated with downstream effectors including STAT3, PIK3R1, SRC, PCLG1, GRB2 and GAB1. Interacts with SPSB1, SPSB2 and SPSB4. Interacts with INPP5D/SHIP1. When phosphorylated at Tyr-1357, interacts with INPPL1/SHIP2. Interacts with RANBP9 and RANBP10, as well as SPSB1, SPSB2, SPSB3 and SPSB4. SPSB1 binding occurs in the presence and in the absence of HGF, however HGF treatment has a positive effect on this interaction. Interacts with MUC20; prevents interaction with GRB2 and suppresses hepatocyte growth factor-induced cell proliferation. Interacts with GRB10. Interacts with PTPN1 and PTPN2. Interacts with HSP90AA1 and HSP90AB1; the interaction suppresses MET kinase activity. Interacts with tensin TNS3. Interacts (when phosphorylated) with tensin TNS4 (via SH2 domain); the interaction increases MET protein stability by inhibiting MET endocytosis and subsequent lysosomal degradation. Post-translationally, autophosphorylated in response to ligand binding on Tyr-1235 and Tyr-1236 in the kinase domain leading to further phosphorylation of Tyr-1350 and Tyr-1357 in the C-terminal multifunctional docking site. Dephosphorylated by PTPRJ at Tyr-1350 and Tyr-1366. Dephosphorylated by PTPN1 and PTPN2. Ubiquitinated. Ubiquitination by CBL regulates the receptor stability and activity through proteasomal degradation. In terms of processing, O-mannosylation of IPT/TIG domains by TMEM260 is required for protein maturation. O-mannosylated residues are composed of single mannose glycans that are not elongated or modified. Expressed at highest levels in lung, liver and kidney, also expressed in stomach, intestine, spleen, testis and brain. Not expressed in heart or muscle.

It localises to the membrane. It catalyses the reaction L-tyrosyl-[protein] + ATP = O-phospho-L-tyrosyl-[protein] + ADP + H(+). In its inactive state, the C-terminal tail interacts with the catalytic domain and inhibits the kinase activity. Upon ligand binding, the C-terminal tail is displaced and becomes phosphorylated, thus increasing the kinase activity. Its function is as follows. Receptor tyrosine kinase that transduces signals from the extracellular matrix into the cytoplasm by binding to hepatocyte growth factor/HGF ligand. Regulates many physiological processes including proliferation, scattering, morphogenesis and survival. Ligand binding at the cell surface induces autophosphorylation of MET on its intracellular domain that provides docking sites for downstream signaling molecules. Following activation by ligand, interacts with the PI3-kinase subunit PIK3R1, PLCG1, SRC, GRB2, STAT3 or the adapter GAB1. Recruitment of these downstream effectors by MET leads to the activation of several signaling cascades including the RAS-ERK, PI3 kinase-AKT, or PLCgamma-PKC. The RAS-ERK activation is associated with the morphogenetic effects while PI3K/AKT coordinates prosurvival effects. During embryonic development, MET signaling plays a role in gastrulation, development and migration of muscles and neuronal precursors, angiogenesis and kidney formation. In adults, participates in wound healing as well as organ regeneration and tissue remodeling. Also promotes differentiation and proliferation of hematopoietic cells. This Rattus norvegicus (Rat) protein is Hepatocyte growth factor receptor (Met).